The primary structure comprises 131 residues: Histone H2B.1 (131 aa).

The span at 1 to 20 (MAPPKAEKKPASKAPAEKKP) shows a compositional bias: basic and acidic residues. The interval 1-39 (MAPPKAEKKPASKAPAEKKPAAKKTASATDSKKRTKTRK) is disordered. Lys8 and Lys9 each carry N6-acetyllysine; alternate. Glycyl lysine isopeptide (Lys-Gly) (interchain with G-Cter in SUMO); alternate cross-links involve residues Lys8 and Lys9. Residue Ser12 is modified to Phosphoserine. At Lys13 the chain carries N6-acetyllysine. Lys18 is subject to N6-acetyllysine; alternate. Lys18 participates in a covalent cross-link: Glycyl lysine isopeptide (Lys-Gly) (interchain with G-Cter in SUMO); alternate. Lys19 is covalently cross-linked (Glycyl lysine isopeptide (Lys-Gly) (interchain with G-Cter in SUMO)). Lys125 participates in a covalent cross-link: Glycyl lysine isopeptide (Lys-Gly) (interchain with G-Cter in ubiquitin).

This sequence belongs to the histone H2B family. In terms of assembly, the nucleosome is a histone octamer containing two molecules each of H2A, H2B, H3 and H4 assembled in one H3-H4 heterotetramer and two H2A-H2B heterodimers. The octamer wraps approximately 147 bp of DNA. Post-translationally, monoubiquitinated to form H2BK123ub1. H2BK123ub1 gives a specific tag for epigenetic transcriptional activation and is also prerequisite for H3K4me and H3K79me formation. H2BK123ub1 also modulates the formation of double-strand breaks during meiosis and is a prerequisite for DNA-damage checkpoint activation. Phosphorylated by STE20 to form H2BS10ph during progression through meiotic prophase. May be correlated with chromosome condensation. In terms of processing, acetylated by GCN5 to form H2BK11ac and H2BK16ac. H2BK16ac can also be formed by ESA1. Acetylation of N-terminal lysines and particularly formation of H2BK11acK16ac has a positive effect on transcription. Post-translationally, sumoylation to form H2BK6su or H2BK7su, and probably also H2BK16su or H2BK17su, occurs preferentially near the telomeres and represses gene transcription.

The protein localises to the nucleus. It is found in the chromosome. Its function is as follows. Core component of nucleosome. Nucleosomes wrap and compact DNA into chromatin, limiting DNA accessibility to the cellular machineries which require DNA as a template. Histones thereby play a central role in transcription regulation, DNA repair, DNA replication and chromosomal stability. DNA accessibility is regulated via a complex set of post-translational modifications of histones, also called histone code, and nucleosome remodeling. This is Histone H2B.1 (HTB1) from Scheffersomyces stipitis (strain ATCC 58785 / CBS 6054 / NBRC 10063 / NRRL Y-11545) (Yeast).